We begin with the raw amino-acid sequence, 185 residues long: Segregation and condensation protein B (185 aa).

Belongs to the ScpB family. In terms of assembly, homodimer. Homodimerization may be required to stabilize the binding of ScpA to the Smc head domains. Component of a cohesin-like complex composed of ScpA, ScpB and the Smc homodimer, in which ScpA and ScpB bind to the head domain of Smc. The presence of the three proteins is required for the association of the complex with DNA.

Its subcellular location is the cytoplasm. Participates in chromosomal partition during cell division. May act via the formation of a condensin-like complex containing Smc and ScpA that pull DNA away from mid-cell into both cell halves. This Carboxydothermus hydrogenoformans (strain ATCC BAA-161 / DSM 6008 / Z-2901) protein is Segregation and condensation protein B.